The primary structure comprises 102 residues: MPSQKIRIRLKAFDHKLLDQSVGEIVDTAKRTGARVAGPIPLPTIINKYCVLRGPHVDKKSREQFEIRTHKRLIDILDPTQQTVDALMKLDLSAGVDVEIKL.

The protein belongs to the universal ribosomal protein uS10 family. Part of the 30S ribosomal subunit.

In terms of biological role, involved in the binding of tRNA to the ribosomes. This is Small ribosomal subunit protein uS10 from Geobacter metallireducens (strain ATCC 53774 / DSM 7210 / GS-15).